Reading from the N-terminus, the 709-residue chain is Polyribonucleotide nucleotidyltransferase (709 aa).

Positions 485 and 491 each coordinate Mg(2+). The KH domain occupies Pro552–Ile611. Residues Gly621–Lys689 enclose the S1 motif domain.

This sequence belongs to the polyribonucleotide nucleotidyltransferase family. In terms of assembly, component of the RNA degradosome, which is a multiprotein complex involved in RNA processing and mRNA degradation. Mg(2+) is required as a cofactor.

Its subcellular location is the cytoplasm. The catalysed reaction is RNA(n+1) + phosphate = RNA(n) + a ribonucleoside 5'-diphosphate. In terms of biological role, involved in mRNA degradation. Catalyzes the phosphorolysis of single-stranded polyribonucleotides processively in the 3'- to 5'-direction. This is Polyribonucleotide nucleotidyltransferase from Haemophilus influenzae (strain 86-028NP).